A 263-amino-acid chain; its full sequence is Putative 2-aminoethylphosphonate transport system permease protein PhnV (263 aa).

A run of 6 helical transmembrane segments spans residues 13–33 (GVVA…VILM), 69–89 (LTIG…AALA), 104–124 (VFYL…LVAF), 131–151 (MNGT…AFTF), 185–205 (LPLL…LSMG), and 233–253 (NIAD…LLMM). One can recognise an ABC transmembrane type-1 domain in the interval 65–253 (LLASLTIGFC…LVAITLLLMM (189 aa)).

It belongs to the binding-protein-dependent transport system permease family.

The protein localises to the cell inner membrane. In terms of biological role, probably part of the PhnSTUV complex (TC 3.A.1.11.5) involved in 2-aminoethylphosphonate import. Probably responsible for the translocation of the substrate across the membrane. The protein is Putative 2-aminoethylphosphonate transport system permease protein PhnV (phnV) of Salmonella typhi.